A 491-amino-acid polypeptide reads, in one-letter code: UDP-N-acetylmuramoyl-L-alanyl-D-glutamate--2,6-diaminopimelate ligase (491 aa).

S30 serves as a coordination point for UDP-N-acetyl-alpha-D-muramoyl-L-alanyl-D-glutamate. 108 to 114 (GTNGKTT) serves as a coordination point for ATP. Residues N149, 150–151 (TT), S177, Q183, and R185 each bind UDP-N-acetyl-alpha-D-muramoyl-L-alanyl-D-glutamate. K217 bears the N6-carboxylysine mark. Residues R383, 407 to 410 (DNPR), G458, and E462 each bind meso-2,6-diaminopimelate. Positions 407 to 410 (DNPR) match the Meso-diaminopimelate recognition motif motif.

The protein belongs to the MurCDEF family. MurE subfamily. Mg(2+) serves as cofactor. In terms of processing, carboxylation is probably crucial for Mg(2+) binding and, consequently, for the gamma-phosphate positioning of ATP.

The protein localises to the cytoplasm. It carries out the reaction UDP-N-acetyl-alpha-D-muramoyl-L-alanyl-D-glutamate + meso-2,6-diaminopimelate + ATP = UDP-N-acetyl-alpha-D-muramoyl-L-alanyl-gamma-D-glutamyl-meso-2,6-diaminopimelate + ADP + phosphate + H(+). It participates in cell wall biogenesis; peptidoglycan biosynthesis. Functionally, catalyzes the addition of meso-diaminopimelic acid to the nucleotide precursor UDP-N-acetylmuramoyl-L-alanyl-D-glutamate (UMAG) in the biosynthesis of bacterial cell-wall peptidoglycan. The polypeptide is UDP-N-acetylmuramoyl-L-alanyl-D-glutamate--2,6-diaminopimelate ligase (Listeria monocytogenes serovar 1/2a (strain ATCC BAA-679 / EGD-e)).